Reading from the N-terminus, the 387-residue chain is Zinc finger protein neuro-d4 (387 aa).

Glycyl lysine isopeptide (Lys-Gly) (interchain with G-Cter in SUMO2) cross-links involve residues Lys106, Lys129, and Lys133. A C2H2-type zinc finger spans residues 195 to 218; sequence YVCDICGKRYKNRPGLSYHYTHTH. 2 consecutive PHD-type zinc fingers follow at residues 271–328 and 325–375; these read NGYC…CKSC and CKSC…CLRH. Residues Cys274, Cys277, Cys293, Cys296, His301, Cys304, Cys322, Cys325, Cys328, Cys331, Cys343, Cys346, His351, Cys354, Cys369, and Cys372 each coordinate Zn(2+).

The protein belongs to the requiem/DPF family. In terms of assembly, component of neuron-specific chromatin remodeling complex (nBAF complex) composed of at least, ARID1A/BAF250A or ARID1B/BAF250B, SMARCD1/BAF60A, SMARCD3/BAF60C, SMARCA2/BRM/BAF190B, SMARCA4/BRG1/BAF190A, SMARCB1/BAF47, SMARCC1/BAF155, SMARCE1/BAF57, SMARCC2/BAF170, DPF1/BAF45B, DPF3/BAF45C, ACTL6B/BAF53B and actin. At embryonic stages, predominant expression in the nervous system. Expressed specifically in postmitotic neurons (at protein level).

Its subcellular location is the cytoplasm. The protein localises to the nucleus. In terms of biological role, may have an important role in developing neurons by participating in regulation of cell survival, possibly as a neurospecific transcription factor. Belongs to the neuron-specific chromatin remodeling complex (nBAF complex). During neural development a switch from a stem/progenitor to a postmitotic chromatin remodeling mechanism occurs as neurons exit the cell cycle and become committed to their adult state. The transition from proliferating neural stem/progenitor cells to postmitotic neurons requires a switch in subunit composition of the npBAF and nBAF complexes. As neural progenitors exit mitosis and differentiate into neurons, npBAF complexes which contain ACTL6A/BAF53A and PHF10/BAF45A, are exchanged for homologous alternative ACTL6B/BAF53B and DPF1/BAF45B or DPF3/BAF45C subunits in neuron-specific complexes (nBAF). The npBAF complex is essential for the self-renewal/proliferative capacity of the multipotent neural stem cells. The nBAF complex along with CREST plays a role regulating the activity of genes essential for dendrite growth. The polypeptide is Zinc finger protein neuro-d4 (Mus musculus (Mouse)).